We begin with the raw amino-acid sequence, 301 residues long: N-carbamoylputrescine amidase (301 aa).

The region spanning 11–269 is the CN hydrolase domain; the sequence is VSVAAVQFAC…EDVLVAEFDL (259 aa). Glu-50 serves as the catalytic Proton acceptor. The Proton donor role is filled by Lys-123. Residue Cys-160 is the Nucleophile of the active site.

Belongs to the carbon-nitrogen hydrolase superfamily. As to quaternary structure, homooctamer.

It carries out the reaction N-carbamoylputrescine + H2O + 2 H(+) = putrescine + NH4(+) + CO2. Its pathway is amine and polyamine biosynthesis; putrescine biosynthesis via agmatine pathway; putrescine from N-carbamoylputrescine (amidase route): step 1/1. In terms of biological role, involved in polyamine biosynthesis. The protein is N-carbamoylputrescine amidase (CPA) of Oryza sativa subsp. japonica (Rice).